Here is a 541-residue protein sequence, read N- to C-terminus: AT-rich interactive domain-containing protein 3A (541 aa).

A disordered region spans residues 17–172 (RLQQELEARQ…KHPNPQAFPT (156 aa)). The span at 55–73 (LKIQRAQAAALAAMRAAAA) shows a compositional bias: low complexity. The span at 84–102 (SDEEEEDGESMASDEEDEK) shows a compositional bias: acidic residues. A compositionally biased stretch (basic and acidic residues) spans 103–112 (ERDGESERYP). Over residues 115 to 144 (GSEEEDLKGKWDEDDFEDEGEEDDYEDMEE) the composition is skewed to acidic residues. The ARID domain occupies 212 to 304 (DPKRKEFLDD…YLYPYECEKR (93 aa)). Residues 407–501 (AALEQLREKL…GVLFAQPPTS (95 aa)) enclose the REKLES domain. The important for nuclear localization stretch occupies residues 408 to 450 (ALEQLREKLESGEPPEKKMALGTEEQQRLQRAIQHNLLAMTAQ). The homodimerization stretch occupies residues 452 to 473 (PMNIRINSQAEGRQDSAVNLTT). Positions 497–504 (QPPTSASG) are important for cytoplasmic localization. The interval 499–541 (PTSASGTSKGSSNRTGSIGGGSSTSQAAPPPAPSAPTSNNPSP) is disordered.

As to quaternary structure, homodimer.

The protein localises to the nucleus. It is found in the cytoplasm. Transcription factor required for smad1 and smad2-mediated responses to TGFbeta during mesoderm induction. The polypeptide is AT-rich interactive domain-containing protein 3A (arid3a) (Xenopus tropicalis (Western clawed frog)).